The sequence spans 526 residues: Maturase K (526 aa).

Belongs to the intron maturase 2 family. MatK subfamily.

The protein resides in the plastid. The protein localises to the chloroplast. Its function is as follows. Usually encoded in the trnK tRNA gene intron. Probably assists in splicing its own and other chloroplast group II introns. In Iris setosa (Hiougi-ayame), this protein is Maturase K.